Here is a 266-residue protein sequence, read N- to C-terminus: METFQVILLALIQGLTEFLPISSSAHLILPSQILGWADQGLSFDVAVNTGSLFAVVIYFRHEIVVLAKAWFTSLASKQQTQESKLAWWIILATIPAVIVGFTAKDFIETHFRNTLVIAITTIVFGLLLWAADRMSKAQLTEFQMGWKKALLIGLAQAMALIPGTSRSGATMTAALMLGLTRDAAARFSFLMSVPVSFGAALLVTKDLVSSPAPIDYQALGLGIVVSFVAAYLCIHFFLKFISKIGMTPFVLYRLALGAILLGLLYL.

8 consecutive transmembrane segments (helical) span residues 1 to 21, 39 to 59, 87 to 107, 111 to 131, 144 to 164, 183 to 203, 218 to 238, and 244 to 264; these read METFQVILLALIQGLTEFLPI, QGLSFDVAVNTGSLFAVVIYF, WWIILATIPAVIVGFTAKDFI, FRNTLVIAITTIVFGLLLWAA, MGWKKALLIGLAQAMALIPGT, AAARFSFLMSVPVSFGAALLV, ALGLGIVVSFVAAYLCIHFFL, and IGMTPFVLYRLALGAILLGLL.

This sequence belongs to the UppP family.

The protein resides in the cell inner membrane. The catalysed reaction is di-trans,octa-cis-undecaprenyl diphosphate + H2O = di-trans,octa-cis-undecaprenyl phosphate + phosphate + H(+). Its function is as follows. Catalyzes the dephosphorylation of undecaprenyl diphosphate (UPP). Confers resistance to bacitracin. The polypeptide is Undecaprenyl-diphosphatase (Shewanella frigidimarina (strain NCIMB 400)).